Consider the following 127-residue polypeptide: Large ribosomal subunit protein uL24 (127 aa).

Belongs to the universal ribosomal protein uL24 family. In terms of assembly, component of the large ribosomal subunit. Mature ribosomes consist of a small (40S) and a large (60S) subunit. The 40S subunit contains about 32 different proteins and 1 molecule of RNA (18S). The 60S subunit contains 45 different proteins and 3 molecules of RNA (25S, 5.8S and 5S).

Its subcellular location is the cytoplasm. Functionally, component of the ribosome, a large ribonucleoprotein complex responsible for the synthesis of proteins in the cell. The small ribosomal subunit (SSU) binds messenger RNAs (mRNAs) and translates the encoded message by selecting cognate aminoacyl-transfer RNA (tRNA) molecules. The large subunit (LSU) contains the ribosomal catalytic site termed the peptidyl transferase center (PTC), which catalyzes the formation of peptide bonds, thereby polymerizing the amino acids delivered by tRNAs into a polypeptide chain. The nascent polypeptides leave the ribosome through a tunnel in the LSU and interact with protein factors that function in enzymatic processing, targeting, and the membrane insertion of nascent chains at the exit of the ribosomal tunnel. In Candida albicans (strain SC5314 / ATCC MYA-2876) (Yeast), this protein is Large ribosomal subunit protein uL24.